The following is a 341-amino-acid chain: MKMQDKLNQIKELALVEIKEAKDSTTIDTIRVKYLGKKGELTTILRGMGSLSKEERPIVGKLANEVREVLEAELEAITKAVKEAEKQEKLKNEVIDISMPGKKQTIGKKHPLEQTLDEMKKIFVSMGFAIEDGPEVEKDYYNFEALNIPKNHPARSEQDTFYINDNVVLRTQTSPVQARVMEKQQPPIKMISPGKVFRSDAVDATHSPIFYQMEGLVIDKDITFADLKGTLELFAKKMFGDKVKTKFRPHHFPFTEPSAEMDATCFVCNGKGCKVCKGEGWIEILGCGMVHPQVLRNCGIDPEVYSGFAFGFGVDRMVMLKYGIDDIRLLYESDMRFLNQF.

Mg(2+) is bound at residue Glu-256.

The protein belongs to the class-II aminoacyl-tRNA synthetase family. Phe-tRNA synthetase alpha subunit type 1 subfamily. Tetramer of two alpha and two beta subunits. Requires Mg(2+) as cofactor.

Its subcellular location is the cytoplasm. The enzyme catalyses tRNA(Phe) + L-phenylalanine + ATP = L-phenylalanyl-tRNA(Phe) + AMP + diphosphate + H(+). The sequence is that of Phenylalanine--tRNA ligase alpha subunit from Clostridium perfringens (strain 13 / Type A).